Here is a 333-residue protein sequence, read N- to C-terminus: DNA-directed RNA polymerase subunit alpha (333 aa).

The tract at residues 1-246 (MEKFIKINWT…AHLNIIGDVN (246 aa)) is alpha N-terminal domain (alpha-NTD). The segment at 263 to 333 (HSKTQNILIQ…YNVFLDKGEE (71 aa)) is alpha C-terminal domain (alpha-CTD).

It belongs to the RNA polymerase alpha chain family. In terms of assembly, homodimer. The RNAP catalytic core consists of 2 alpha, 1 beta, 1 beta' and 1 omega subunit. When a sigma factor is associated with the core the holoenzyme is formed, which can initiate transcription.

The catalysed reaction is RNA(n) + a ribonucleoside 5'-triphosphate = RNA(n+1) + diphosphate. In terms of biological role, DNA-dependent RNA polymerase catalyzes the transcription of DNA into RNA using the four ribonucleoside triphosphates as substrates. This chain is DNA-directed RNA polymerase subunit alpha, found in Mycoplasma mobile (strain ATCC 43663 / 163K / NCTC 11711) (Mesomycoplasma mobile).